The primary structure comprises 261 residues: UPF0246 protein Rmet_0978 (261 aa).

This sequence belongs to the UPF0246 family.

This chain is UPF0246 protein Rmet_0978, found in Cupriavidus metallidurans (strain ATCC 43123 / DSM 2839 / NBRC 102507 / CH34) (Ralstonia metallidurans).